The chain runs to 146 residues: uncharacterized protein (146 aa).

Residues 7–27 (FVLSITIVLVILIIIAFIWYN) traverse the membrane as a helical segment.

It belongs to the asfivirus E146L family.

The protein resides in the host membrane. It is found in the virion. This is an uncharacterized protein from African swine fever virus (strain Badajoz 1971 Vero-adapted) (Ba71V).